The sequence spans 188 residues: Ion-translocating oxidoreductase complex subunit B (188 aa).

Residues 1-26 are hydrophobic; the sequence is MMSLWIAIGALSTLALVSGVVLGFAA. A 4Fe-4S domain is found at 32–91; the sequence is DEDPVVEQVDAILPQSQCGQCGYPGCRPYAEAVSTGGEKINKCAPGGEQVMLKLAELLAV. Residues Cys-49, Cys-52, Cys-57, Cys-74, Cys-117, Cys-120, Cys-123, Cys-127, Cys-147, Cys-150, Cys-153, and Cys-157 each contribute to the [4Fe-4S] cluster site. 4Fe-4S ferredoxin-type domains are found at residues 108–137 and 138–167; these read KVAF…GATR and AMHT…MIPV.

The protein belongs to the 4Fe4S bacterial-type ferredoxin family. RnfB subfamily. The complex is composed of six subunits: RnfA, RnfB, RnfC, RnfD, RnfE and RnfG. It depends on [4Fe-4S] cluster as a cofactor.

Its subcellular location is the cell inner membrane. Its function is as follows. Part of a membrane-bound complex that couples electron transfer with translocation of ions across the membrane. This Yersinia pestis bv. Antiqua (strain Antiqua) protein is Ion-translocating oxidoreductase complex subunit B.